Consider the following 211-residue polypeptide: Large ribosomal subunit protein uL3 (211 aa).

Gln-150 is modified (N5-methylglutamine).

Belongs to the universal ribosomal protein uL3 family. Part of the 50S ribosomal subunit. Forms a cluster with proteins L14 and L19. Post-translationally, methylated by PrmB.

Its function is as follows. One of the primary rRNA binding proteins, it binds directly near the 3'-end of the 23S rRNA, where it nucleates assembly of the 50S subunit. This is Large ribosomal subunit protein uL3 from Pseudomonas aeruginosa (strain LESB58).